The following is a 308-amino-acid chain: Thymidylate synthase (308 aa).

Residues Arg26 and 170–171 each bind dUMP; that span reads RR. Cys190 acts as the Nucleophile in catalysis. DUMP is bound by residues 210-213, Asn221, and 251-253; these read RSCD and HVY. Residue Asp213 participates in (6R)-5,10-methylene-5,6,7,8-tetrahydrofolate binding. Residue Ala307 participates in (6R)-5,10-methylene-5,6,7,8-tetrahydrofolate binding.

Belongs to the thymidylate synthase family. Bacterial-type ThyA subfamily. Homodimer.

It localises to the cytoplasm. The catalysed reaction is dUMP + (6R)-5,10-methylene-5,6,7,8-tetrahydrofolate = 7,8-dihydrofolate + dTMP. Its pathway is pyrimidine metabolism; dTTP biosynthesis. Catalyzes the reductive methylation of 2'-deoxyuridine-5'-monophosphate (dUMP) to 2'-deoxythymidine-5'-monophosphate (dTMP) while utilizing 5,10-methylenetetrahydrofolate (mTHF) as the methyl donor and reductant in the reaction, yielding dihydrofolate (DHF) as a by-product. This enzymatic reaction provides an intracellular de novo source of dTMP, an essential precursor for DNA biosynthesis. The chain is Thymidylate synthase from Rhizorhabdus wittichii (strain DSM 6014 / CCUG 31198 / JCM 15750 / NBRC 105917 / EY 4224 / RW1) (Sphingomonas wittichii).